The primary structure comprises 460 residues: Putative glycoside/cation symporter YagG (460 aa).

The Cytoplasmic portion of the chain corresponds to 1-9 (MTQLTMKDK). Helical transmembrane passes span 10–30 (IGYG…MFLL) and 31–51 (AYFY…LFLV). At 52–78 (SRVLDAVTDPLMGLLVDRTRTRHGQFR) the chain is on the cytoplasmic side. A helical transmembrane segment spans residues 79–99 (PFLLWGAIPFGIVCVLTFYTP). The Periplasmic portion of the chain corresponds to 100–106 (DFSAQGK). The chain crosses the membrane as a helical span at residues 107-127 (IIYACVTYILLTLVYTFVNVP). The Cytoplasmic segment spans residues 128–150 (YCAMPGVITADPKERHALQSWRF). Residues 151–171 (FLAAAGSLAISGIALPLVSII) form a helical membrane-spanning segment. The Periplasmic segment spans residues 172–179 (GKGDEQVG). A helical membrane pass occupies residues 180-200 (YFGAMCVLGLSGVVLLYVCFF). Over 201–262 (TTKERYTFEV…FVKYVMDHPE (62 aa)) the chain is Cytoplasmic. The helical transmembrane segment at 263–283 (LATQFLLYGSLATMFGSLCSS) threads the bilayer. The Periplasmic portion of the chain corresponds to 284 to 308 (RLLGRFDRVTAFKWIIVAYSLISLL). The helical transmembrane segment at 309-329 (IFVTPAEHIALIFALNILFLF) threads the bilayer. Over 330-366 (VFNTTTPLQWLMASDVVDYEESRSGRRLDGLVFSTYL) the chain is Cytoplasmic. Residues 367 to 387 (FSLKIGLAIGGAVVGWILAYV) form a helical membrane-spanning segment. Residues 388-405 (NYSASSSVQPVEVLTTIK) are Periplasmic-facing. A helical transmembrane segment spans residues 406–426 (ILFCVVPVVLYAGMFIMLSLY). Residues 427–460 (KLTDARVEAISRQLIKHRAAQGEAVPDAATAASH) are Cytoplasmic-facing.

It belongs to the sodium:galactoside symporter (TC 2.A.2) family.

It is found in the cell inner membrane. This Escherichia coli (strain K12) protein is Putative glycoside/cation symporter YagG (yagG).